Here is a 146-residue protein sequence, read N- to C-terminus: Anti-sigma F factor (146 aa).

It belongs to the anti-sigma-factor family.

It catalyses the reaction L-seryl-[protein] + ATP = O-phospho-L-seryl-[protein] + ADP + H(+). It carries out the reaction L-threonyl-[protein] + ATP = O-phospho-L-threonyl-[protein] + ADP + H(+). Functionally, binds to sigma F and blocks its ability to form an RNA polymerase holoenzyme (E-sigma F). Phosphorylates SpoIIAA on a serine residue. This phosphorylation may enable SpoIIAA to act as an anti-anti-sigma factor that counteracts SpoIIAB and thus releases sigma F from inhibition. This chain is Anti-sigma F factor, found in Geobacillus kaustophilus (strain HTA426).